Reading from the N-terminus, the 242-residue chain is Probable transcriptional regulatory protein NGK_1508 (242 aa).

Belongs to the TACO1 family.

It is found in the cytoplasm. This is Probable transcriptional regulatory protein NGK_1508 from Neisseria gonorrhoeae (strain NCCP11945).